Here is a 691-residue protein sequence, read N- to C-terminus: Elongation factor G (691 aa).

In terms of domain architecture, tr-type G spans 8–282 (ERVRNIGIAA…AVVDYLPAPV (275 aa)). GTP contacts are provided by residues 17-24 (AHIDAGKT), 81-85 (DTPGH), and 135-138 (NKMD).

This sequence belongs to the TRAFAC class translation factor GTPase superfamily. Classic translation factor GTPase family. EF-G/EF-2 subfamily.

The protein localises to the cytoplasm. Its function is as follows. Catalyzes the GTP-dependent ribosomal translocation step during translation elongation. During this step, the ribosome changes from the pre-translocational (PRE) to the post-translocational (POST) state as the newly formed A-site-bound peptidyl-tRNA and P-site-bound deacylated tRNA move to the P and E sites, respectively. Catalyzes the coordinated movement of the two tRNA molecules, the mRNA and conformational changes in the ribosome. The sequence is that of Elongation factor G from Prochlorococcus marinus (strain MIT 9313).